The sequence spans 194 residues: 7-methyl-GTP pyrophosphatase (194 aa).

D70 serves as the catalytic Proton acceptor.

The protein belongs to the Maf family. YceF subfamily. The cofactor is a divalent metal cation.

It localises to the cytoplasm. The catalysed reaction is N(7)-methyl-GTP + H2O = N(7)-methyl-GMP + diphosphate + H(+). Functionally, nucleoside triphosphate pyrophosphatase that hydrolyzes 7-methyl-GTP (m(7)GTP). May have a dual role in cell division arrest and in preventing the incorporation of modified nucleotides into cellular nucleic acids. The protein is 7-methyl-GTP pyrophosphatase of Vibrio vulnificus (strain CMCP6).